We begin with the raw amino-acid sequence, 89 residues long: Small ribosomal subunit protein uS15 (89 aa).

The tract at residues 1-24 (MSLDTTEKQQLINSHQTHATDTGS) is disordered. Positions 8–24 (KQQLINSHQTHATDTGS) are enriched in polar residues.

This sequence belongs to the universal ribosomal protein uS15 family. As to quaternary structure, part of the 30S ribosomal subunit. Forms a bridge to the 50S subunit in the 70S ribosome, contacting the 23S rRNA.

In terms of biological role, one of the primary rRNA binding proteins, it binds directly to 16S rRNA where it helps nucleate assembly of the platform of the 30S subunit by binding and bridging several RNA helices of the 16S rRNA. Its function is as follows. Forms an intersubunit bridge (bridge B4) with the 23S rRNA of the 50S subunit in the ribosome. The sequence is that of Small ribosomal subunit protein uS15 from Synechococcus sp. (strain CC9311).